The sequence spans 148 residues: Cytochrome c-type biogenesis protein CcmE (148 aa).

At 1-7 (MKPRNRR) the chain is on the cytoplasmic side. Residues 8-28 (IALIVAGLSALGIATALVLNA) traverse the membrane as a helical; Signal-anchor for type II membrane protein segment. The Periplasmic segment spans residues 29–148 (FQSNLVFFFT…VQKKPASRKP (120 aa)). Heme-binding residues include His123 and Tyr127. The interval 128–148 (MPPEAQHALDEVQKKPASRKP) is disordered.

This sequence belongs to the CcmE/CycJ family.

The protein localises to the cell inner membrane. In terms of biological role, heme chaperone required for the biogenesis of c-type cytochromes. Transiently binds heme delivered by CcmC and transfers the heme to apo-cytochromes in a process facilitated by CcmF and CcmH. The polypeptide is Cytochrome c-type biogenesis protein CcmE (Pseudomonas aeruginosa).